The primary structure comprises 469 residues: Interstitial collagenase (469 aa).

The N-terminal stretch at 1–18 (MPRLPLLLLLLWGTGSHG) is a signal peptide. Positions 19 to 99 (FPAATSETQE…PRCGVPDVAP (81 aa)) are cleaved as a propeptide — activation peptide. Residues 90-97 (PRCGVPDV) carry the Cysteine switch motif. Residue Cys92 coordinates Zn(2+). The N-linked (GlcNAc...) asparagine glycan is linked to Asn120. Ca(2+) contacts are provided by Asp124 and Asp158. Zn(2+) contacts are provided by His168 and Asp170. Residues Asp175, Gly176, Gly178, and Asn180 each coordinate Ca(2+). Residue His183 participates in Zn(2+) binding. Gly190, Gly192, and Asp194 together coordinate Ca(2+). His196 contacts Zn(2+). Asp198, Asp199, and Glu201 together coordinate Ca(2+). Residue His218 coordinates Zn(2+). Glu219 is a catalytic residue. The Zn(2+) site is built by His222 and His228. Thr274 is modified (phosphothreonine). Hemopexin repeat units lie at residues 275–324 (PEVC…WPQL), 325–371 (PNGL…FGFP), 374–422 (VKSI…FPGI), and 423–466 (GNKV…WFNC). An intrachain disulfide couples Cys278 to Cys466. 2 residues coordinate Ca(2+): Asp285 and Gln329. The residue at position 360 (Tyr360) is a Phosphotyrosine; by PKDCC. Asp378 and Asp427 together coordinate Ca(2+).

This sequence belongs to the peptidase M10A family. Ca(2+) is required as a cofactor. The cofactor is Zn(2+). Post-translationally, tyrosine phosphorylated in platelets by PKDCC/VLK.

Its subcellular location is the secreted. It is found in the extracellular space. The protein localises to the extracellular matrix. The enzyme catalyses Cleavage of the triple helix of collagen at about three-quarters of the length of the molecule from the N-terminus, at 775-Gly-|-Ile-776 in the alpha1(I) chain. Cleaves synthetic substrates and alpha-macroglobulins at bonds where P1' is a hydrophobic residue.. With respect to regulation, can be activated without removal of the activation peptide. In terms of biological role, cleaves collagens of types I, II, and III at one site in the helical domain. Also cleaves collagens of types VII and X. This is Interstitial collagenase (MMP1) from Bos taurus (Bovine).